The following is a 270-amino-acid chain: Regulatory protein RecX (270 aa).

Belongs to the RecX family.

Its subcellular location is the cytoplasm. In terms of biological role, modulates RecA activity. This chain is Regulatory protein RecX, found in Bacillus cereus (strain G9842).